Reading from the N-terminus, the 276-residue chain is Formamidopyrimidine-DNA glycosylase (276 aa).

Proline 2 (schiff-base intermediate with DNA) is an active-site residue. Glutamate 3 functions as the Proton donor in the catalytic mechanism. Lysine 58 serves as the catalytic Proton donor; for beta-elimination activity. Positions 94, 112, and 157 each coordinate DNA. Residues 242 to 276 form an FPG-type zinc finger; that stretch reads FVYDRAGEPCRVCGAPIRQIVQGQRSTYYCPNCQR. The active-site Proton donor; for delta-elimination activity is the arginine 266.

Belongs to the FPG family. As to quaternary structure, monomer. It depends on Zn(2+) as a cofactor.

The catalysed reaction is Hydrolysis of DNA containing ring-opened 7-methylguanine residues, releasing 2,6-diamino-4-hydroxy-5-(N-methyl)formamidopyrimidine.. It catalyses the reaction 2'-deoxyribonucleotide-(2'-deoxyribose 5'-phosphate)-2'-deoxyribonucleotide-DNA = a 3'-end 2'-deoxyribonucleotide-(2,3-dehydro-2,3-deoxyribose 5'-phosphate)-DNA + a 5'-end 5'-phospho-2'-deoxyribonucleoside-DNA + H(+). In terms of biological role, involved in base excision repair of DNA damaged by oxidation or by mutagenic agents. Acts as a DNA glycosylase that recognizes and removes damaged bases. Has a preference for oxidized purines, such as 7,8-dihydro-8-oxoguanine (8-oxoG). Has AP (apurinic/apyrimidinic) lyase activity and introduces nicks in the DNA strand. Cleaves the DNA backbone by beta-delta elimination to generate a single-strand break at the site of the removed base with both 3'- and 5'-phosphates. This Burkholderia thailandensis (strain ATCC 700388 / DSM 13276 / CCUG 48851 / CIP 106301 / E264) protein is Formamidopyrimidine-DNA glycosylase.